The following is a 198-amino-acid chain: Glycerol-3-phosphate acyltransferase (198 aa).

A run of 5 helical transmembrane segments spans residues 1–21 (MTIIIIVLSYFLGSIPTGFLF), 77–97 (HLFEVLAGISAVSGHIWPIWL), 111–131 (MFIALSWKVGFASLGIFLIIL), 136–156 (IVSLSSILAAFFLPLFMFLDI), and 157–177 (GVTNHPYFLISLVVSILVILK).

The protein belongs to the PlsY family. In terms of assembly, probably interacts with PlsX.

Its subcellular location is the cell inner membrane. It catalyses the reaction an acyl phosphate + sn-glycerol 3-phosphate = a 1-acyl-sn-glycero-3-phosphate + phosphate. The protein operates within lipid metabolism; phospholipid metabolism. Catalyzes the transfer of an acyl group from acyl-phosphate (acyl-PO(4)) to glycerol-3-phosphate (G3P) to form lysophosphatidic acid (LPA). This enzyme utilizes acyl-phosphate as fatty acyl donor, but not acyl-CoA or acyl-ACP. This chain is Glycerol-3-phosphate acyltransferase, found in Prochlorococcus marinus (strain MIT 9515).